Consider the following 349-residue polypeptide: GDSL esterase/lipase At1g58525 (349 aa).

The N-terminal stretch at 1–19 is a signal peptide; sequence MKLQILLLALVLIAVEANA. Asparagine 25 carries N-linked (GlcNAc...) asparagine glycosylation. Serine 37 functions as the Nucleophile in the catalytic mechanism. Asparagine 316 carries N-linked (GlcNAc...) asparagine glycosylation. Residues aspartate 324 and histidine 327 contribute to the active site.

Belongs to the 'GDSL' lipolytic enzyme family.

It is found in the secreted. The polypeptide is GDSL esterase/lipase At1g58525 (Arabidopsis thaliana (Mouse-ear cress)).